Reading from the N-terminus, the 701-residue chain is DNA ligase (701 aa).

NAD(+) is bound by residues 43 to 47, 92 to 93, and Glu-126; these read DAAYD and SL. Catalysis depends on Lys-128, which acts as the N6-AMP-lysine intermediate. NAD(+) is bound by residues Arg-149, Glu-186, Lys-302, and Lys-326. Zn(2+) contacts are provided by Cys-420, Cys-423, Cys-444, and Cys-450. Residues 623–701 enclose the BRCT domain; sequence ANDSPVAGKT…EDEWFDLIGA (79 aa).

The protein belongs to the NAD-dependent DNA ligase family. LigA subfamily. The cofactor is Mg(2+). It depends on Mn(2+) as a cofactor.

It carries out the reaction NAD(+) + (deoxyribonucleotide)n-3'-hydroxyl + 5'-phospho-(deoxyribonucleotide)m = (deoxyribonucleotide)n+m + AMP + beta-nicotinamide D-nucleotide.. Functionally, DNA ligase that catalyzes the formation of phosphodiester linkages between 5'-phosphoryl and 3'-hydroxyl groups in double-stranded DNA using NAD as a coenzyme and as the energy source for the reaction. It is essential for DNA replication and repair of damaged DNA. In Maricaulis maris (strain MCS10) (Caulobacter maris), this protein is DNA ligase.